The following is a 75-amino-acid chain: Putative membrane protein insertion efficiency factor (75 aa).

Belongs to the UPF0161 family.

The protein localises to the cell membrane. Could be involved in insertion of integral membrane proteins into the membrane. The sequence is that of Putative membrane protein insertion efficiency factor (ytjA) from Bacillus subtilis (strain 168).